The chain runs to 63 residues: Large ribosomal subunit protein uL29 (63 aa).

It belongs to the universal ribosomal protein uL29 family.

The chain is Large ribosomal subunit protein uL29 from Bacillus cereus (strain ATCC 14579 / DSM 31 / CCUG 7414 / JCM 2152 / NBRC 15305 / NCIMB 9373 / NCTC 2599 / NRRL B-3711).